The chain runs to 267 residues: Chlorophyll a-b binding protein 3B, chloroplastic (267 aa).

A chloroplast-targeting transit peptide spans 1–34; that stretch reads MAASTMALSSSTFAGKAVKLSPSSSEISGNGRIT. The segment at 19 to 52 is disordered; the sequence is KLSPSSSEISGNGRITMRKTAAKPKPASSGSPWX. The helical transmembrane segment at 153-173 threads the bilayer; the sequence is LVHAQSILAIWACQVVLMGAV. Residues valine 154, serine 158, glutamine 166, glutamate 174, arginine 177, and leucine 183 each coordinate chlorophyll b. Residues lysine 214, glutamate 215, asparagine 218, arginine 220, glutamine 232, histidine 247, and alanine 256 each contribute to the chlorophyll a site. The chain crosses the membrane as a helical span at residues 221–241; the sequence is LAMFSMFGFFVQAIVTGKGPL. Phenylalanine 263 serves as a coordination point for chlorophyll b.

Belongs to the light-harvesting chlorophyll a/b-binding (LHC) protein family. The LHC complex consists of chlorophyll a-b binding proteins. The cofactor is Binds at least 14 chlorophylls (8 Chl-a and 6 Chl-b) and carotenoids such as lutein and neoxanthin.. Photoregulated by reversible phosphorylation of its threonine residues.

The protein localises to the plastid. It localises to the chloroplast thylakoid membrane. In terms of biological role, the light-harvesting complex (LHC) functions as a light receptor, it captures and delivers excitation energy to photosystems with which it is closely associated. The sequence is that of Chlorophyll a-b binding protein 3B, chloroplastic (CAB3B) from Solanum lycopersicum (Tomato).